Reading from the N-terminus, the 139-residue chain is Small ribosomal subunit protein uS11 (139 aa).

The tract at residues 117 to 139 is disordered; it reads VEDVTPIPHDGTRPKGGRRGRRV.

The protein belongs to the universal ribosomal protein uS11 family. Part of the 30S ribosomal subunit.

In terms of biological role, located on the platform of the 30S subunit. The chain is Small ribosomal subunit protein uS11 from Thermococcus onnurineus (strain NA1).